Here is a 239-residue protein sequence, read N- to C-terminus: Ribosomal RNA small subunit methyltransferase G (239 aa).

S-adenosyl-L-methionine-binding positions include glycine 77, phenylalanine 82, 128 to 129 (AE), and arginine 147. Positions 219 to 239 (RKTPKKYPRKPGTPNKLPIEK) are disordered.

This sequence belongs to the methyltransferase superfamily. RNA methyltransferase RsmG family.

It localises to the cytoplasm. Functionally, specifically methylates the N7 position of guanine in position 535 of 16S rRNA. The protein is Ribosomal RNA small subunit methyltransferase G of Bacillus cytotoxicus (strain DSM 22905 / CIP 110041 / 391-98 / NVH 391-98).